An 81-amino-acid polypeptide reads, in one-letter code: Putative defensin-like protein 265 (81 aa).

The N-terminal stretch at 1–26 (MEKTVSRKVVVLAILLSLSCLCIAKA) is a signal peptide. Intrachain disulfides connect Cys48-Cys66, Cys54-Cys71, and Cys58-Cys73.

It belongs to the DEFL family.

Its subcellular location is the secreted. The sequence is that of Putative defensin-like protein 265 from Arabidopsis thaliana (Mouse-ear cress).